Consider the following 303-residue polypeptide: UDP-N-acetylenolpyruvoylglucosamine reductase (303 aa).

One can recognise an FAD-binding PCMH-type domain in the interval lysine 29 to lysine 196. Residue arginine 174 is part of the active site. The Proton donor role is filled by serine 225. Residue glutamate 295 is part of the active site.

It belongs to the MurB family. It depends on FAD as a cofactor.

The protein localises to the cytoplasm. The catalysed reaction is UDP-N-acetyl-alpha-D-muramate + NADP(+) = UDP-N-acetyl-3-O-(1-carboxyvinyl)-alpha-D-glucosamine + NADPH + H(+). The protein operates within cell wall biogenesis; peptidoglycan biosynthesis. Functionally, cell wall formation. This is UDP-N-acetylenolpyruvoylglucosamine reductase from Bacillus velezensis (strain DSM 23117 / BGSC 10A6 / LMG 26770 / FZB42) (Bacillus amyloliquefaciens subsp. plantarum).